The sequence spans 729 residues: Monosaccharide-sensing protein 2 (729 aa).

The next 6 helical transmembrane spans lie at 1-21 (MSGA…QGWD), 47-67 (LIVA…GGVA), 81-101 (ILYF…VLLL), 104-124 (LLDG…ISET), 139-159 (FTGS…SLMP), and 165-185 (LMLG…VFFL). Residues 347-363 (VGEGEDYPSDHGDDSED) are compositionally biased toward acidic residues. Disordered regions lie at residues 347–367 (VGEG…DLHS) and 423–442 (ERED…RRGS). Positions 423-434 (EREDESGQKEEG) are enriched in basic and acidic residues. A phosphoserine mark is found at S438 and G448. Transmembrane regions (helical) follow at residues 507–527 (ALVV…NGVL), 553–573 (ASLL…AVAM), 585–605 (LLTT…SNLV), 610–630 (IVHA…FVMG), 650–670 (ICIA…TYSL), and 679–699 (LAGV…FVFI).

Belongs to the major facilitator superfamily. Sugar transporter (TC 2.A.1.1) family. Mostly expressed in roots and stems, and, to a lower extent, in juvenile and adult leaves, and in flower tissues.

The protein localises to the vacuole membrane. It carries out the reaction D-glucose(out) + H(+)(in) = D-glucose(in) + H(+)(out). The enzyme catalyses sucrose(out) + H(+)(in) = sucrose(in) + H(+)(out). Sugar proton-coupled antiporter which contributes to vacuolar sugar import (e.g. monosaccharides including glucose, sucrose and fructose), particularly during stress responses (e.g. in response to cold). In Arabidopsis thaliana (Mouse-ear cress), this protein is Monosaccharide-sensing protein 2.